The sequence spans 94 residues: Acylphosphatase (94 aa).

One can recognise an Acylphosphatase-like domain in the interval 8–94 (RLTAWVHGRV…REQITGFHER (87 aa)). Active-site residues include Arg23 and Asn41.

This sequence belongs to the acylphosphatase family.

It carries out the reaction an acyl phosphate + H2O = a carboxylate + phosphate + H(+). This chain is Acylphosphatase (acyP), found in Mycobacterium sp. (strain KMS).